The chain runs to 430 residues: Glucose-1-phosphate adenylyltransferase (430 aa).

Residues Gly-163, 178-179 (EK), and Ser-210 contribute to the alpha-D-glucose 1-phosphate site.

The protein belongs to the bacterial/plant glucose-1-phosphate adenylyltransferase family. In terms of assembly, homotetramer.

It catalyses the reaction alpha-D-glucose 1-phosphate + ATP + H(+) = ADP-alpha-D-glucose + diphosphate. Its pathway is glycan biosynthesis; glycogen biosynthesis. Functionally, involved in the biosynthesis of ADP-glucose, a building block required for the elongation reactions to produce glycogen. Catalyzes the reaction between ATP and alpha-D-glucose 1-phosphate (G1P) to produce pyrophosphate and ADP-Glc. The chain is Glucose-1-phosphate adenylyltransferase from Synechococcus elongatus (strain ATCC 33912 / PCC 7942 / FACHB-805) (Anacystis nidulans R2).